Here is a 172-residue protein sequence, read N- to C-terminus: Translation initiation factor IF-3 (172 aa).

The protein belongs to the IF-3 family. As to quaternary structure, monomer.

Its subcellular location is the cytoplasm. Its function is as follows. IF-3 binds to the 30S ribosomal subunit and shifts the equilibrium between 70S ribosomes and their 50S and 30S subunits in favor of the free subunits, thus enhancing the availability of 30S subunits on which protein synthesis initiation begins. This Thermotoga maritima (strain ATCC 43589 / DSM 3109 / JCM 10099 / NBRC 100826 / MSB8) protein is Translation initiation factor IF-3.